Reading from the N-terminus, the 135-residue chain is uncharacterized protein (135 aa).

This is an uncharacterized protein from Magallana gigas (Pacific oyster).